A 604-amino-acid chain; its full sequence is Putative O-acetyltransferase SAV0974 (604 aa).

11 consecutive transmembrane segments (helical) span residues 15–35 (YMPGLDGLRAIAVLGIIIYHL), 43–63 (GFLGVDTFFVISGYLITSLLL), 85–105 (LLPAVIVLLMVVGTATLLLKS), 150–170 (AIEEQFYIFFPVILVTLLLTI), 176–196 (IGFIFWGVSIISLGLMMFIYS), 212–232 (LQTLLLGVILAFLWPPFKLKN), 240–260 (YVIDSIGSLSFIVLILLFFII), 267–287 (IYDGGFYLISILTLFIIASVV), 310–330 (YSLYLWHFAVISFVHSYYVDG), 332–352 (IPVYVYFIDISLTIIFAELSY), and 377–397 (FIRMAIVVTLLIPFMLILVGA). Active-site residues include Ser459, Asp581, and His584.

It belongs to the acyltransferase 3 family.

It localises to the cell membrane. The chain is Putative O-acetyltransferase SAV0974 from Staphylococcus aureus (strain Mu50 / ATCC 700699).